The primary structure comprises 148 residues: Ribonuclease pancreatic (148 aa).

An N-terminal signal peptide occupies residues 1–25 (MGLEKSLLLLPLLVLVLGCVQPSLG). 2 residues coordinate substrate: K32 and R35. The Proton acceptor role is filled by H37. Intrachain disulfides connect C50–C108, C64–C119, C82–C134, and C89–C96. Residues 65 to 69 (KPVNT) and K90 contribute to the substrate site. The Proton donor role is filled by H143.

The protein belongs to the pancreatic ribonuclease family. Monomer. Interacts with and forms tight 1:1 complexes with RNH1. Dimerization of two such complexes may occur. Interaction with RNH1 inhibits this protein. In terms of tissue distribution, pancreas.

The protein localises to the secreted. The enzyme catalyses an [RNA] containing cytidine + H2O = an [RNA]-3'-cytidine-3'-phosphate + a 5'-hydroxy-ribonucleotide-3'-[RNA].. It carries out the reaction an [RNA] containing uridine + H2O = an [RNA]-3'-uridine-3'-phosphate + a 5'-hydroxy-ribonucleotide-3'-[RNA].. Functionally, endonuclease that catalyzes the cleavage of RNA on the 3' side of pyrimidine nucleotides. Acts on single-stranded and double-stranded RNA. This Gerbillus nigeriae (Nigerian gerbil) protein is Ribonuclease pancreatic (RNASE1).